The sequence spans 159 residues: Phosphopantetheine adenylyltransferase (159 aa).

Thr9 lines the substrate pocket. Residues Thr9–Phe10 and His17 each bind ATP. 3 residues coordinate substrate: Lys41, Leu73, and Arg87. ATP-binding positions include Gly88 to Arg90, Glu98, and Tyr123 to Thr129.

This sequence belongs to the bacterial CoaD family. As to quaternary structure, homohexamer. Requires Mg(2+) as cofactor.

Its subcellular location is the cytoplasm. The catalysed reaction is (R)-4'-phosphopantetheine + ATP + H(+) = 3'-dephospho-CoA + diphosphate. The protein operates within cofactor biosynthesis; coenzyme A biosynthesis; CoA from (R)-pantothenate: step 4/5. In terms of biological role, reversibly transfers an adenylyl group from ATP to 4'-phosphopantetheine, yielding dephospho-CoA (dPCoA) and pyrophosphate. The chain is Phosphopantetheine adenylyltransferase from Azotobacter vinelandii (strain DJ / ATCC BAA-1303).